Reading from the N-terminus, the 483-residue chain is Protein nucleotidyltransferase YdiU (483 aa).

ATP contacts are provided by Gly87, Gly89, Arg90, Lys110, Asp122, Gly123, Arg173, and Arg180. Asp249 functions as the Proton acceptor in the catalytic mechanism. Mg(2+) contacts are provided by Asn250 and Asp259. ATP is bound at residue Asp259.

This sequence belongs to the SELO family. Mg(2+) serves as cofactor. Mn(2+) is required as a cofactor.

It catalyses the reaction L-seryl-[protein] + ATP = 3-O-(5'-adenylyl)-L-seryl-[protein] + diphosphate. The enzyme catalyses L-threonyl-[protein] + ATP = 3-O-(5'-adenylyl)-L-threonyl-[protein] + diphosphate. The catalysed reaction is L-tyrosyl-[protein] + ATP = O-(5'-adenylyl)-L-tyrosyl-[protein] + diphosphate. It carries out the reaction L-histidyl-[protein] + UTP = N(tele)-(5'-uridylyl)-L-histidyl-[protein] + diphosphate. It catalyses the reaction L-seryl-[protein] + UTP = O-(5'-uridylyl)-L-seryl-[protein] + diphosphate. The enzyme catalyses L-tyrosyl-[protein] + UTP = O-(5'-uridylyl)-L-tyrosyl-[protein] + diphosphate. Its function is as follows. Nucleotidyltransferase involved in the post-translational modification of proteins. It can catalyze the addition of adenosine monophosphate (AMP) or uridine monophosphate (UMP) to a protein, resulting in modifications known as AMPylation and UMPylation. This chain is Protein nucleotidyltransferase YdiU, found in Pectobacterium carotovorum subsp. carotovorum (strain PC1).